We begin with the raw amino-acid sequence, 310 residues long: DDRGK domain-containing protein 1 (310 aa).

A helical transmembrane segment spans residues 1–21 (MAAIIYLAIAAVASILLFVAV). Residues 22 to 310 (KLLSTDTKTE…DSPAEISVNA (289 aa)) are Cytoplasmic-facing. Disordered regions lie at residues 38-85 (VGEL…DEYQ) and 110-162 (KAEK…LKEE). A compositionally biased stretch (basic residues) spans 52–70 (PRARARRGLRNKTNRSKTQ). The segment covering 76–85 (DYDDYDDEYQ) has biased composition (acidic residues).

Belongs to the DDRGK1 family.

Its subcellular location is the endoplasmic reticulum membrane. Substrate adapter for ufmylation, the covalent attachment of the ubiquitin-like modifier UFM1 to substrate proteins. This is DDRGK domain-containing protein 1 from Trichoplax adhaerens (Trichoplax reptans).